A 344-amino-acid chain; its full sequence is MMVIRPVERSDVSALMQLASKTGGGLTSLPANEATLSVRIERAIKTWQGELPKSEQGYVFVLEDSETGTVAGICAIEVAVGLNDPWYNYRVGTLVHASKELNVYNALPTLFLSNDHTGSSELCTLFLDPKWRKEGNGYLLSKSRFMFMAAFRDKFNDKVVAEMRGVIDEHGYSPFWQSLGKRFFSMDFSRADFLCGTGQKAFIAELMPKHPIYTYFLSQEAQDVIGQVHPQTAPARAVLEKEGFRYRNYIDIFDGGPTLECDIDRVRAIRKSRLVEVAEGQPAQGDFPACLVANENYHHFRVVLVRTDPATERLILTAAQLDVLKCHAGDRVRLVRLCAEEKTA.

Position 125 (Leu125) interacts with succinyl-CoA. Catalysis depends on His229, which acts as the Proton donor.

This sequence belongs to the arginine N-succinyltransferase family.

The enzyme catalyses succinyl-CoA + L-arginine = N(2)-succinyl-L-arginine + CoA + H(+). Its pathway is amino-acid degradation; L-arginine degradation via AST pathway; L-glutamate and succinate from L-arginine: step 1/5. Its function is as follows. Catalyzes the transfer of succinyl-CoA to arginine to produce N(2)-succinylarginine. The sequence is that of Arginine N-succinyltransferase from Escherichia coli (strain UTI89 / UPEC).